The chain runs to 274 residues: tRNA-cytidine(32) 2-sulfurtransferase (274 aa).

Residues 40 to 45 carry the PP-loop motif motif; sequence SGGKDS. C115, C118, and C206 together coordinate [4Fe-4S] cluster.

The protein belongs to the TtcA family. As to quaternary structure, homodimer. The cofactor is Mg(2+). [4Fe-4S] cluster is required as a cofactor.

It localises to the cytoplasm. The catalysed reaction is cytidine(32) in tRNA + S-sulfanyl-L-cysteinyl-[cysteine desulfurase] + AH2 + ATP = 2-thiocytidine(32) in tRNA + L-cysteinyl-[cysteine desulfurase] + A + AMP + diphosphate + H(+). It functions in the pathway tRNA modification. Its function is as follows. Catalyzes the ATP-dependent 2-thiolation of cytidine in position 32 of tRNA, to form 2-thiocytidine (s(2)C32). The sulfur atoms are provided by the cysteine/cysteine desulfurase (IscS) system. The polypeptide is tRNA-cytidine(32) 2-sulfurtransferase (Pseudomonas aeruginosa (strain LESB58)).